Consider the following 1104-residue polypeptide: MACIKGVGRSASVALAPDAPYMAAGTMAGAVDLSFSSSANLEIFKLDFQSDDRDLPLVGEIPSSERFNRLAWGRNGSGSEEFALGLIAGGLVDGNIDLWNPLSLIGSQPSENALVGHLSVHKGPVRGLEFNAISSNLLASGADDGEICIWDLLKPSEPSHFPLLKGSGSATQGEISFISWNRKVQQILASTSYNGTTVIWDLRKQKPIINFADSVRRRCSVLQWNPNVTTQIMVASDDDSSPTLKLWDMRNIMSPVREFTGHQRGVIAMEWCPSDSSYLLTCAKDNRTICWDTNTAEIVAELPAGNNWNFDVHWYPKIPGVISASSFDGKIGIYNIEGCSRYGVEENNFGTAPLKAPKWYKRPVGASFGFGGKLVSCHARAPAKGTSSILSEVFLHSLVTEQSLVSRTSEFEAAIENGDMTSLRGLCEKKSEETESEEEKETWGLLKIMFEEEGTSRTKLISHLGFTLPVAEKDQAVDGLSSDLNGIRLEDTAADALDLDDSNEAAAFAMDNGEDFFNNFPAKPDTPVSTSAKDFMPSDTDFSTKGEETQEMQEEEEESSDPVFDNAIQRALIVGDYKEAVDQCITANKMADALVIAHVGGTALWESTREKYLKTSSAPYMKVVSAMVNNDLRSLIYTRSHKFWKETLALLCTFAQGEQWTTLCDALASKLMAAGNTLAAVLCYICAGNVDRTVEIWSRSLANERDGRSYAELLQDLMEKTLVLALATGNKKFSASLCKLFESYAEILASQGLLTTAMKYLKVLDSGGLSPELSILRDRISLSAEPETNTTASGNTQPQSTMPYNQEPTQAQPNVLANPYDNQYQQPYTDSYYVPQVSHPPMQQPTMFMPHQAQPAPQPSFTPAPTSNAQPSMRTTFVPSTPPALKNADQYQQPTMSSHSFTGPSNNAYPVPPGPGQYAPSGPSQLGQYPNPKMPQVVAPAAGPIGFTPMATPGVAPRSVQPASPPTQQAAAQAAPAPATPPPTVQTADTSNVPAHQKPVIATLTRLFNETSEALGGARANTTKKREIEDNSRKLGALFVKLNSGDISKNAADKLAQLCQALDNNDFSTALQIQVLLTTSEWDECNFWLATLKRMMVKARQNVR.

WD repeat units follow at residues lysine 5–lysine 45, proline 62–proline 109, valine 120–histidine 160, alanine 170–asparagine 210, serine 214–arginine 257, glycine 261–glutamate 301, and alanine 304–valine 344. Threonine 526 is subject to Phosphothreonine. The tract at residues proline 527–proline 562 is disordered. A compositionally biased stretch (acidic residues) spans threonine 549–serine 560. The WD 8 repeat unit spans residues threonine 662–glycine 707. 4 disordered regions span residues leucine 782 to alanine 811, histidine 851 to arginine 874, glutamine 892 to asparagine 931, and threonine 952 to proline 994. Polar residues-rich tracts occupy residues proline 786 to alanine 811, proline 863 to arginine 874, and glutamine 892 to alanine 908. Residues serine 959–alanine 977 are compositionally biased toward low complexity.

Belongs to the WD repeat SEC31 family. In terms of assembly, interacts with SEC13A and SEC13B.

The protein resides in the golgi apparatus. The protein localises to the endoplasmic reticulum. Required for protein transport from the endoplasmic reticulum to the Golgi apparatus. The protein is Protein transport protein SEC31 homolog B of Arabidopsis thaliana (Mouse-ear cress).